We begin with the raw amino-acid sequence, 197 residues long: Peptidyl-tRNA hydrolase (197 aa).

Tyr18 contacts tRNA. The active-site Proton acceptor is His23. Tyr68, Asn70, and Asn116 together coordinate tRNA.

Belongs to the PTH family. In terms of assembly, monomer.

It localises to the cytoplasm. The catalysed reaction is an N-acyl-L-alpha-aminoacyl-tRNA + H2O = an N-acyl-L-amino acid + a tRNA + H(+). Hydrolyzes ribosome-free peptidyl-tRNAs (with 1 or more amino acids incorporated), which drop off the ribosome during protein synthesis, or as a result of ribosome stalling. Its function is as follows. Catalyzes the release of premature peptidyl moieties from peptidyl-tRNA molecules trapped in stalled 50S ribosomal subunits, and thus maintains levels of free tRNAs and 50S ribosomes. The polypeptide is Peptidyl-tRNA hydrolase (Desulfotalea psychrophila (strain LSv54 / DSM 12343)).